A 184-amino-acid chain; its full sequence is MNWQSERIWIELITGSRKTSNFCWACILFLGSLGFLLVGTSSYLGRNLISLFPSQQILFFPQGIVMSFYGIAGLFISSYLWCTISWNVGSGYDLFDRKEGIVCIFRWGFPGINRRIFLRFLMRDIQSIRMEVKEGLYPRRVLYMEIRGQGAIPLTRTDENFTPREIEQKAAESAYFLRVPIEVF.

Helical transmembrane passes span 22-42 and 57-77; these read FCWACILFLGSLGFLLVGTSS and ILFFPQGIVMSFYGIAGLFIS.

The protein belongs to the Ycf4 family.

Its subcellular location is the plastid. It is found in the chloroplast thylakoid membrane. Functionally, seems to be required for the assembly of the photosystem I complex. The polypeptide is Photosystem I assembly protein Ycf4 (Liriodendron tulipifera (Tuliptree)).